A 192-amino-acid chain; its full sequence is Spermatogenesis-associated protein 3 (192 aa).

Over residues 1–15 the composition is skewed to basic residues; the sequence is MKKVKKKRSEARRHR. Disordered stretches follow at residues 1–65 and 161–184; these read MKKV…TTSR and SRKP…GSGG. Over residues 19 to 59 the composition is skewed to low complexity; that stretch reads SQHASSNSTSQQPSPESTPQQPSPESTPQQPSPESTPQHSS.

The protein localises to the cell projection. Its subcellular location is the cilium. It is found in the flagellum. This chain is Spermatogenesis-associated protein 3 (SPATA3), found in Homo sapiens (Human).